Consider the following 557-residue polypeptide: Dihydroxy-acid dehydratase 1 (557 aa).

A [2Fe-2S] cluster-binding site is contributed by cysteine 50. A Mg(2+)-binding site is contributed by aspartate 82. Position 123 (cysteine 123) interacts with [2Fe-2S] cluster. The Mg(2+) site is built by aspartate 124 and lysine 125. N6-carboxylysine is present on lysine 125. Position 195 (cysteine 195) interacts with [2Fe-2S] cluster. Glutamate 447 provides a ligand contact to Mg(2+). Serine 473 serves as the catalytic Proton acceptor.

Belongs to the IlvD/Edd family. In terms of assembly, homodimer. It depends on [2Fe-2S] cluster as a cofactor. The cofactor is Mg(2+).

It catalyses the reaction (2R)-2,3-dihydroxy-3-methylbutanoate = 3-methyl-2-oxobutanoate + H2O. It carries out the reaction (2R,3R)-2,3-dihydroxy-3-methylpentanoate = (S)-3-methyl-2-oxopentanoate + H2O. It participates in amino-acid biosynthesis; L-isoleucine biosynthesis; L-isoleucine from 2-oxobutanoate: step 3/4. It functions in the pathway amino-acid biosynthesis; L-valine biosynthesis; L-valine from pyruvate: step 3/4. Functions in the biosynthesis of branched-chain amino acids. Catalyzes the dehydration of (2R,3R)-2,3-dihydroxy-3-methylpentanoate (2,3-dihydroxy-3-methylvalerate) into 2-oxo-3-methylpentanoate (2-oxo-3-methylvalerate) and of (2R)-2,3-dihydroxy-3-methylbutanoate (2,3-dihydroxyisovalerate) into 2-oxo-3-methylbutanoate (2-oxoisovalerate), the penultimate precursor to L-isoleucine and L-valine, respectively. The polypeptide is Dihydroxy-acid dehydratase 1 (Cupriavidus pinatubonensis (strain JMP 134 / LMG 1197) (Cupriavidus necator (strain JMP 134))).